The sequence spans 361 residues: MKAKVIVGMSGGVDSSVAAWLLKEQGYQVEGLFMKNWEQDDHNDFCPAAKDLADAQAVCNQLRIPLHTVNFSKEYWDRVFAYFLSEYEKGRTPNPDVLCNKEIKFNAFLNHALNLGADYIATGHYAKNTIEGSIGYLFKAKDREKDQTYFLHAVEPEALSKTIFPIGDFTKPQIREFAKQLGLVTHAKKDSTGICFIGEKRFKTFLNEFILAKPGEIKSTGGKTLGQHDGLMFYTLGQRQGLGIGGLQNSTDEPWYVVDKDIASNTLYVAQGSQHPMLYSQGLICGPIHWLADYENHLPLTCFAKTRYRQTDQACMISPPDNNLHYVIFSSPQRAITPGQFIVFYEKNQCLGGATIEQIIR.

ATP-binding positions include G8–S15 and M34. Residues N94 to D96 form an interaction with target base in tRNA region. The active-site Nucleophile is C99. C99 and C195 are disulfide-bonded. G123 is an ATP binding site. The segment at K145–Q147 is interaction with tRNA. The Cysteine persulfide intermediate role is filled by C195. The interval R307–Y308 is interaction with tRNA.

This sequence belongs to the MnmA/TRMU family.

The protein resides in the cytoplasm. The catalysed reaction is S-sulfanyl-L-cysteinyl-[protein] + uridine(34) in tRNA + AH2 + ATP = 2-thiouridine(34) in tRNA + L-cysteinyl-[protein] + A + AMP + diphosphate + H(+). Functionally, catalyzes the 2-thiolation of uridine at the wobble position (U34) of tRNA, leading to the formation of s(2)U34. The protein is tRNA-specific 2-thiouridylase MnmA of Legionella pneumophila (strain Paris).